The following is a 236-amino-acid chain: Biosynthetic peptidoglycan transglycosylase (236 aa).

Residues 12 to 31 (ALLWFVAGSIVLVLVFRWVP) form a helical membrane-spanning segment.

The protein belongs to the glycosyltransferase 51 family.

It is found in the cell inner membrane. The enzyme catalyses [GlcNAc-(1-&gt;4)-Mur2Ac(oyl-L-Ala-gamma-D-Glu-L-Lys-D-Ala-D-Ala)](n)-di-trans,octa-cis-undecaprenyl diphosphate + beta-D-GlcNAc-(1-&gt;4)-Mur2Ac(oyl-L-Ala-gamma-D-Glu-L-Lys-D-Ala-D-Ala)-di-trans,octa-cis-undecaprenyl diphosphate = [GlcNAc-(1-&gt;4)-Mur2Ac(oyl-L-Ala-gamma-D-Glu-L-Lys-D-Ala-D-Ala)](n+1)-di-trans,octa-cis-undecaprenyl diphosphate + di-trans,octa-cis-undecaprenyl diphosphate + H(+). It functions in the pathway cell wall biogenesis; peptidoglycan biosynthesis. Its function is as follows. Peptidoglycan polymerase that catalyzes glycan chain elongation from lipid-linked precursors. This Pseudomonas putida (strain ATCC 47054 / DSM 6125 / CFBP 8728 / NCIMB 11950 / KT2440) protein is Biosynthetic peptidoglycan transglycosylase.